The primary structure comprises 236 residues: Biosynthetic peptidoglycan transglycosylase (236 aa).

The helical transmembrane segment at 12–31 (ALLWFAAGSALVVLVLRWVP) threads the bilayer.

The protein belongs to the glycosyltransferase 51 family.

Its subcellular location is the cell inner membrane. It catalyses the reaction [GlcNAc-(1-&gt;4)-Mur2Ac(oyl-L-Ala-gamma-D-Glu-L-Lys-D-Ala-D-Ala)](n)-di-trans,octa-cis-undecaprenyl diphosphate + beta-D-GlcNAc-(1-&gt;4)-Mur2Ac(oyl-L-Ala-gamma-D-Glu-L-Lys-D-Ala-D-Ala)-di-trans,octa-cis-undecaprenyl diphosphate = [GlcNAc-(1-&gt;4)-Mur2Ac(oyl-L-Ala-gamma-D-Glu-L-Lys-D-Ala-D-Ala)](n+1)-di-trans,octa-cis-undecaprenyl diphosphate + di-trans,octa-cis-undecaprenyl diphosphate + H(+). Its pathway is cell wall biogenesis; peptidoglycan biosynthesis. Functionally, peptidoglycan polymerase that catalyzes glycan chain elongation from lipid-linked precursors. This Pseudomonas syringae pv. tomato (strain ATCC BAA-871 / DC3000) protein is Biosynthetic peptidoglycan transglycosylase.